A 281-amino-acid polypeptide reads, in one-letter code: Probable replication-associated protein repA1 (281 aa).

This sequence belongs to the IncFII RepA family.

Its function is as follows. This protein is essential for plasmid replication; it is involved in copy control functions. This chain is Probable replication-associated protein repA1 (repA1), found in Buchnera aphidicola subsp. Cinara cedri (strain Cc).